The primary structure comprises 87 residues: Small ribosomal subunit protein bS20 (87 aa).

A compositionally biased stretch (basic residues) spans 1–15; the sequence is MANHKSAAKRARQSI. The segment at 1 to 29 is disordered; it reads MANHKSAAKRARQSIRKTAVNNARKSTVK. Over residues 19 to 29 the composition is skewed to polar residues; that stretch reads AVNNARKSTVK.

It belongs to the bacterial ribosomal protein bS20 family.

Its function is as follows. Binds directly to 16S ribosomal RNA. This chain is Small ribosomal subunit protein bS20, found in Bdellovibrio bacteriovorus (strain ATCC 15356 / DSM 50701 / NCIMB 9529 / HD100).